The primary structure comprises 432 residues: Neuronal pentraxin-1 (432 aa).

The signal sequence occupies residues 1–22; it reads MLAGRAARTCALLALCLLGSRA. The disordered stretch occupies residues 90–128; it reads ESQSTLDAGPGEARSGGGRKQPGSGKNTMGDLSRTPASE. N-linked (GlcNAc...) asparagine glycans are attached at residues Asn154 and Asn193. Positions 226–428 constitute a Pentraxin (PTX) domain; sequence DKFQLTFPLR…GATKWTFEAC (203 aa). Cysteines 256 and 316 form a disulfide. Ca(2+)-binding residues include Asn280, Glu358, Gln359, Asp360, and Gln370.

Homooligomer or heterooligomer (probably pentamer) with neuronal pentraxin receptor (NPTXR). It depends on Ca(2+) as a cofactor. In terms of processing, glycosylated. Cerebellum, hippocampus and cerebral cortex.

Its subcellular location is the secreted. It is found in the cytoplasmic vesicle. The protein localises to the secretory vesicle. The protein resides in the endoplasmic reticulum. Its function is as follows. May be involved in mediating uptake of synaptic material during synapse remodeling or in mediating the synaptic clustering of AMPA glutamate receptors at a subset of excitatory synapses. The sequence is that of Neuronal pentraxin-1 (Nptx1) from Rattus norvegicus (Rat).